The sequence spans 209 residues: N-(5'-phosphoribosyl)anthranilate isomerase (209 aa).

Belongs to the TrpF family.

It carries out the reaction N-(5-phospho-beta-D-ribosyl)anthranilate = 1-(2-carboxyphenylamino)-1-deoxy-D-ribulose 5-phosphate. It functions in the pathway amino-acid biosynthesis; L-tryptophan biosynthesis; L-tryptophan from chorismate: step 3/5. The protein is N-(5'-phosphoribosyl)anthranilate isomerase of Pelobacter propionicus (strain DSM 2379 / NBRC 103807 / OttBd1).